A 371-amino-acid polypeptide reads, in one-letter code: Flagellar P-ring protein (371 aa).

A signal peptide spans 1–21; sequence MSRSFFATVLGLALAAMTVMA.

The protein belongs to the FlgI family. The basal body constitutes a major portion of the flagellar organelle and consists of four rings (L,P,S, and M) mounted on a central rod.

The protein localises to the periplasm. It is found in the bacterial flagellum basal body. Its function is as follows. Assembles around the rod to form the L-ring and probably protects the motor/basal body from shearing forces during rotation. This chain is Flagellar P-ring protein, found in Caulobacter sp. (strain K31).